Here is a 371-residue protein sequence, read N- to C-terminus: Transaldolase (371 aa).

The active-site Schiff-base intermediate with substrate is the Lys140.

The protein belongs to the transaldolase family. Type 2 subfamily.

The protein resides in the cytoplasm. It catalyses the reaction D-sedoheptulose 7-phosphate + D-glyceraldehyde 3-phosphate = D-erythrose 4-phosphate + beta-D-fructose 6-phosphate. Its pathway is carbohydrate degradation; pentose phosphate pathway; D-glyceraldehyde 3-phosphate and beta-D-fructose 6-phosphate from D-ribose 5-phosphate and D-xylulose 5-phosphate (non-oxidative stage): step 2/3. Its function is as follows. Transaldolase is important for the balance of metabolites in the pentose-phosphate pathway. The sequence is that of Transaldolase from Frankia alni (strain DSM 45986 / CECT 9034 / ACN14a).